A 213-amino-acid chain; its full sequence is Small ribosomal subunit protein uS5 (213 aa).

The S5 DRBM domain occupies 54–117 (LKSETVDVRL…RNAKLNIIPV (64 aa)).

Belongs to the universal ribosomal protein uS5 family. In terms of assembly, part of the 30S ribosomal subunit. Contacts protein S4.

In terms of biological role, with S4 and S12 plays an important role in translational accuracy. This is Small ribosomal subunit protein uS5 from Hyperthermus butylicus (strain DSM 5456 / JCM 9403 / PLM1-5).